A 431-amino-acid polypeptide reads, in one-letter code: Ubiquitin-like modifier-activating enzyme 5 (431 aa).

Positions 92, 113, 136, 159, and 197 each coordinate ATP. Positions 239 and 242 each coordinate Zn(2+). The active-site Glycyl thioester intermediate is Cys-263. Zn(2+)-binding residues include Cys-316 and Cys-321. The tract at residues 339–396 (AKAKMEADASTTIDEGPLHDDNEWNISVVDDENEKDTTKAASSSDTLPEGLTRELPVA) is disordered.

The protein belongs to the ubiquitin-activating E1 family. UBA5 subfamily.

Functionally, E1-like enzyme which activates UFM1. This Arabidopsis thaliana (Mouse-ear cress) protein is Ubiquitin-like modifier-activating enzyme 5.